The chain runs to 273 residues: Octanoyltransferase LipM (273 aa).

The region spanning 33-244 (GKTPPTLRFY…AFTRLYAVEF (212 aa)) is the BPL/LPL catalytic domain. Cysteine 146 acts as the Acyl-thioester intermediate in catalysis.

This sequence belongs to the octanoyltransferase LipM family. Monomer.

It catalyses the reaction octanoyl-[ACP] + L-lysyl-[protein] = N(6)-octanoyl-L-lysyl-[protein] + holo-[ACP] + H(+). It participates in protein modification; protein lipoylation via endogenous pathway; protein N(6)-(lipoyl)lysine from octanoyl-[acyl-carrier-protein]. In terms of biological role, catalyzes the transfer of endogenously produced octanoic acid from octanoyl-acyl-carrier-protein onto the lipoyl domain of GcvH, an intermediate carrier during protein lipoylation. This chain is Octanoyltransferase LipM, found in Moorella thermoacetica (strain ATCC 39073 / JCM 9320).